Here is a 517-residue protein sequence, read N- to C-terminus: N-acetylglucosamine-1-phosphodiester alpha-N-acetylglucosaminidase (517 aa).

The N-terminal stretch at 1–25 (MAAPRGPGLFLIPALLGLLGVAWCS) is a signal peptide. Residues 26-49 (LSFGVSRDDDLLLPYPLARRRPSR) constitute a propeptide, removed in mature form. Positions 49-75 (RDCARVRSGSPEQESWPPPPTNPGASH) are disordered. Over 50–453 (DCARVRSGSP…ASFTRTTWLA (404 aa)) the chain is Lumenal. 5 disulfide bridges follow: Cys-116-Cys-149, Cys-133-Cys-324, Cys-308-Cys-315, Cys-363-Cys-374, and Cys-381-Cys-390. N-linked (GlcNAc...) asparagine glycosylation is found at Asn-215 and Asn-297. The region spanning 359 to 391 (SELDCGPSNCSQHGLCTETGCHCDAGWTGSNCS) is the EGF-like domain. N-linked (GlcNAc...) asparagine glycosylation is found at Asn-367, Asn-389, and Asn-421. The helical transmembrane segment at 454 to 474 (LTLTLIFLLLISTGVNVSLFL) threads the bilayer. Residues 475-517 (GSRAERNRHLDGDYVYHPLQEVNGEALTAEKEHMEETSNPFKD) are Cytoplasmic-facing. The Tyrosine-based internalization motif signature appears at 488-491 (YVYH). A mediates the interaction with AP4M1 region spans residues 488 to 495 (YVYHPLQE). The NPF internalization motif signature appears at 511–515 (TSNPF).

As to quaternary structure, homotetramer arranged as two disulfide-linked homodimers. Interacts with AP4M1. In terms of processing, the precursor is cleaved and activated in the trans-Golgi network by a furin endopeptidase.

The protein resides in the golgi apparatus. It localises to the golgi stack membrane. Its subcellular location is the trans-Golgi network. The enzyme catalyses N(4)-[6-(N-acetyl-alpha-D-glucosaminyl-1-phospho)-alpha-D-mannosyl-(1-&gt;2)-alpha-D-mannosyl-(glycan)]-L-asparaginyl-[protein] + H2O = N(4)-[6-phospho-alpha-D-mannosyl-(1-&gt;2)-alpha-D-mannosyl-(glycan)]-L-asparaginyl-[protein] + N-acetyl-D-glucosamine + H(+). Its pathway is protein modification; protein glycosylation. Functionally, catalyzes the second step in the formation of the mannose 6-phosphate targeting signal on lysosomal enzyme oligosaccharides by removing GlcNAc residues from GlcNAc-alpha-P-mannose moieties, which are formed in the first step. Also hydrolyzes UDP-GlcNAc, a sugar donor for Golgi N-acetylglucosaminyltransferases. This chain is N-acetylglucosamine-1-phosphodiester alpha-N-acetylglucosaminidase (Nagpa), found in Mus musculus (Mouse).